Reading from the N-terminus, the 181-residue chain is Protein Syd (181 aa).

The protein belongs to the Syd family.

The protein resides in the cell inner membrane. Its function is as follows. Interacts with the SecY protein in vivo. May bind preferentially to an uncomplexed state of SecY, thus functioning either as a chelating agent for excess SecY in the cell or as a regulatory factor that negatively controls the translocase function. The chain is Protein Syd from Shigella flexneri.